Consider the following 766-residue polypeptide: Transcription factor GTE4 (766 aa).

Disordered stretches follow at residues 87–108, 234–262, and 388–412; these read GTNS…PGDD, RDTT…PMEE, and GDKL…GDVG. Over residues 238–250 the composition is skewed to polar residues; that stretch reads DAQQPAGLTSDSA. The Bromo domain maps to 416–522; it reads GAGTKVFKNC…QIFEERWAVI (107 aa). 2 disordered regions span residues 544 to 606 and 687 to 766; these read TMRS…NKRD and ARAE…SDQT. The span at 574 to 589 shows a compositional bias: low complexity; that stretch reads PTTTPGRTPTSATPSG. One can recognise an NET domain in the interval 597–678; that stretch reads PKANEPNKRD…NYKKGLSKKK (82 aa). Residues 736–766 are compositionally biased toward low complexity; it reads SRSSSSSSSSSSSSSSDSDSDSSSSSGSDQT.

As to expression, ubiquitously expressed.

The protein resides in the nucleus. In terms of biological role, involved in the activation and maintenance of cell division in the meristems and by this controls cell numbers in differentiated organs. Its action in cell cycle regulation may be directed through the RB-E2F pathway. The chain is Transcription factor GTE4 (GTE4) from Arabidopsis thaliana (Mouse-ear cress).